The following is a 228-amino-acid chain: MKFAVVVFPGSNCDVDMYHAIADELGEEVEYVWHDEDNLDRFDAVLLPGGFSYGDYLRSGAIARFSKVMAAVKKAAEAGKPVLGVCNGFQILLEAGLLPGAMRRNQGLKFICRPVQLTVENHETMFTSAYEKGEVITIPIAHGEGNYYCDEQTLERLVENRQIVFRYHGENPNGSLADIAGIVNEQGNVLGMMPHPERAVDALLGSADGLKLFRSIVNYWRETHVVTA.

The Glutamine amidotransferase type-1 domain maps to A4 to V226. C86 serves as the catalytic Nucleophile. Active-site residues include H195 and E197.

Part of the FGAM synthase complex composed of 1 PurL, 1 PurQ and 2 PurS subunits.

The protein localises to the cytoplasm. The enzyme catalyses N(2)-formyl-N(1)-(5-phospho-beta-D-ribosyl)glycinamide + L-glutamine + ATP + H2O = 2-formamido-N(1)-(5-O-phospho-beta-D-ribosyl)acetamidine + L-glutamate + ADP + phosphate + H(+). The catalysed reaction is L-glutamine + H2O = L-glutamate + NH4(+). The protein operates within purine metabolism; IMP biosynthesis via de novo pathway; 5-amino-1-(5-phospho-D-ribosyl)imidazole from N(2)-formyl-N(1)-(5-phospho-D-ribosyl)glycinamide: step 1/2. Its function is as follows. Part of the phosphoribosylformylglycinamidine synthase complex involved in the purines biosynthetic pathway. Catalyzes the ATP-dependent conversion of formylglycinamide ribonucleotide (FGAR) and glutamine to yield formylglycinamidine ribonucleotide (FGAM) and glutamate. The FGAM synthase complex is composed of three subunits. PurQ produces an ammonia molecule by converting glutamine to glutamate. PurL transfers the ammonia molecule to FGAR to form FGAM in an ATP-dependent manner. PurS interacts with PurQ and PurL and is thought to assist in the transfer of the ammonia molecule from PurQ to PurL. The chain is Phosphoribosylformylglycinamidine synthase subunit PurQ from Geobacillus kaustophilus (strain HTA426).